We begin with the raw amino-acid sequence, 185 residues long: Protein LURP-one-related 13 (185 aa).

Belongs to the LOR family.

Might be related to the phospholipid scramblase and tubby-like superfamily of membrane tethered transcription factors. This is Protein LURP-one-related 13 from Arabidopsis thaliana (Mouse-ear cress).